We begin with the raw amino-acid sequence, 184 residues long: Cell wall protein phiA (184 aa).

Positions 1–21 are cleaved as a signal peptide; sequence MQLKNLIFAAATAAALPATDA. Asn58 carries an N-linked (GlcNAc...) asparagine glycan.

It belongs to the phiA family.

The protein resides in the secreted. It localises to the cell wall. Cell wall protein involved in development of asexual structures such as phialide and conidium development, and thus required for spore formation. Plays a role as a general stress protectant produced by the fungus in competition with antagonistic bacteria. In Aspergillus niger (strain ATCC MYA-4892 / CBS 513.88 / FGSC A1513), this protein is Cell wall protein phiA.